A 442-amino-acid polypeptide reads, in one-letter code: uncharacterized protein (442 aa).

This is an uncharacterized protein from Sputnik virophage.